Reading from the N-terminus, the 68-residue chain is Purkinje cell protein 4-like protein 1 (68 aa).

Residues 1–16 (MSELNTKTSPATNQAA) are compositionally biased toward polar residues. The tract at residues 1 to 45 (MSELNTKTSPATNQAAGQEEKGKAGNVKKAEEEEEIDIDLTAPET) is disordered. Residue T8 is modified to Phosphothreonine. The segment covering 18–31 (QEEKGKAGNVKKAE) has biased composition (basic and acidic residues). Residues 45–68 (TEKAALAIQGKFRRFQKRKKDPSS) form the IQ domain.

This sequence belongs to the PCP4 family.

The chain is Purkinje cell protein 4-like protein 1 (PCP4L1) from Homo sapiens (Human).